A 102-amino-acid chain; its full sequence is PE family immunomodulator PE5 (102 aa).

Positions 3–92 constitute a PE domain; it reads LRVVPEGLAA…GASYLAGDAA (90 aa).

This sequence belongs to the mycobacterial PE family.

The protein resides in the secreted. It localises to the cell envelope. The protein localises to the cell surface. Functionally, important for the siderophore-mediated iron-acquisition function of ESX-3. May play a pivotal role in the evasion of host immune response by M.tuberculosis. Mediates production of IL-10 via activation of the p38 and ERK1/2 mitogen-activated protein kinase (MAPK) signaling pathways. This chain is PE family immunomodulator PE5, found in Mycobacterium tuberculosis (strain ATCC 25618 / H37Rv).